The chain runs to 936 residues: Periplasmic nitrate reductase (936 aa).

Positions 1–31 (MALSRRDFLKSSAAAAAASAVGLSVPKEVEA) form a signal peptide, tat-type signal. Residues 40–96 (WRWDKAVCRFCGTGCGIMIATKDDRIVAVKGDPLAPVNRGLNCIKGYFTAKIMYGAD) form the 4Fe-4S Mo/W bis-MGD-type domain. Positions 47, 50, 54, and 82 each coordinate [4Fe-4S] cluster. Residues K84, Q152, N177, C181, 214–221 (WGSNMAEM), 246–250 (STYTH), M424, Q428, N534, 559–560 (SD), K582, D609, and 826–835 (TGRVLEHWHS) contribute to the Mo-bis(molybdopterin guanine dinucleotide) site. W902 is a substrate binding site. The Mo-bis(molybdopterin guanine dinucleotide) site is built by N910 and K927.

Belongs to the prokaryotic molybdopterin-containing oxidoreductase family. NasA/NapA/NarB subfamily. In terms of assembly, component of the periplasmic nitrate reductase NapAB complex composed of NapA and NapB. Requires [4Fe-4S] cluster as cofactor. Mo-bis(molybdopterin guanine dinucleotide) serves as cofactor. In terms of processing, predicted to be exported by the Tat system. The position of the signal peptide cleavage has not been experimentally proven.

The protein resides in the periplasm. It carries out the reaction 2 Fe(II)-[cytochrome] + nitrate + 2 H(+) = 2 Fe(III)-[cytochrome] + nitrite + H2O. Functionally, catalytic subunit of the periplasmic nitrate reductase complex NapAB. Receives electrons from NapB and catalyzes the reduction of nitrate to nitrite. The protein is Periplasmic nitrate reductase of Nitratiruptor sp. (strain SB155-2).